The primary structure comprises 381 residues: MKRLTILGSTGSIGTQTLDIVRQNPEQLEVFALAAGKNVQEIELQAREFKPQIIGLMEEKAARELKQRVADLDIEVVSGMEGLLRTVTDEVPDTVVTAISGRIGLEPTMEALKAGKDIALANKETLVAGGDLVMGTAQRLGRTILPVDSEHSAIFQCLEEDPRTLDKIILTASGGPFRGWSEEQLREVTPERALQHPNWAMGAKITIDSATMMNKGLEVIEAHHLFNMEYDQIDVLIHPQSVIHSMVQYCDGSVLAQCGRPDMRLPIQYALTYPTRWPNPFERLDLRGKTLSFFDPEDYDFPALKLAYACGKRGGTLPAVMNAANEVAVHAFLARRVAYLEIIGLVDKVCSEHDVLDATDLETILNADHWARIRTEELIHS.

NADPH contacts are provided by Thr-10, Gly-11, Ser-12, Ile-13, Gly-36, Lys-37, Asn-38, and Asn-122. Residue Lys-123 participates in 1-deoxy-D-xylulose 5-phosphate binding. Glu-124 provides a ligand contact to NADPH. Asp-148 contacts Mn(2+). The 1-deoxy-D-xylulose 5-phosphate site is built by Ser-149, Glu-150, Ser-173, and His-196. Glu-150 contacts Mn(2+). Gly-202 is a binding site for NADPH. 1-deoxy-D-xylulose 5-phosphate-binding residues include Ser-209, Asn-214, Lys-215, and Glu-218. Glu-218 provides a ligand contact to Mn(2+).

This sequence belongs to the DXR family. It depends on Mg(2+) as a cofactor. The cofactor is Mn(2+).

The enzyme catalyses 2-C-methyl-D-erythritol 4-phosphate + NADP(+) = 1-deoxy-D-xylulose 5-phosphate + NADPH + H(+). It functions in the pathway isoprenoid biosynthesis; isopentenyl diphosphate biosynthesis via DXP pathway; isopentenyl diphosphate from 1-deoxy-D-xylulose 5-phosphate: step 1/6. In terms of biological role, catalyzes the NADPH-dependent rearrangement and reduction of 1-deoxy-D-xylulose-5-phosphate (DXP) to 2-C-methyl-D-erythritol 4-phosphate (MEP). In Desulfitobacterium hafniense (strain DSM 10664 / DCB-2), this protein is 1-deoxy-D-xylulose 5-phosphate reductoisomerase.